Reading from the N-terminus, the 309-residue chain is Heme A synthase (309 aa).

Topologically, residues 1 to 6 (MTKKLK) are cytoplasmic. Residues 7 to 27 (ILSVISTICMIPLLLGGALVT) form a helical membrane-spanning segment. Residues 28–62 (KTGSADGCGNSWPLCEGQFLPTKISFEMFIELSHR) are Extracellular-facing. The cysteines at positions 35 and 42 are disulfide-linked. E58 is an active-site residue. H61 serves as a coordination point for heme o. The helical transmembrane segment at 63-83 (GVTGVVGILIVYLTYLVWKEL) threads the bilayer. At 84-88 (RHNKE) the chain is on the cytoplasmic side. Residues 89-109 (VVFLAFSALSLMILQALIGAA) form a helical membrane-spanning segment. At 110-123 (AVVWGQSDFALATH) the chain is on the extracellular side. H123 is a heme o binding site. Residues 124–144 (FGISLVCFAAVFLLMLQLFEI) form a helical membrane-spanning segment. At 145 to 159 (DKKLHTEDIHINKTH) the chain is on the cytoplasmic side. A helical membrane pass occupies residues 160–180 (RIEIYAISFYTMCVVYSGALV). At 181–211 (RHTDSNLACRDWPLCVNNSSFGISDYNFYQW) the chain is on the extracellular side. The cysteines at positions 189 and 195 are disulfide-linked. Residues 212–232 (VQMGHRLAAGILFIWTVILTI) traverse the membrane as a helical segment. Residue H216 coordinates heme b. The Cytoplasmic portion of the chain corresponds to 233 to 247 (RMVKHYKNSKVFYWS). The chain crosses the membrane as a helical span at residues 248-268 (WLITLGLITLQVLFGALIIFT). At 269–271 (SLN) the chain is on the extracellular side. Residues 272 to 292 (LAIALFHALFITCYFGMLSFF) form a helical membrane-spanning segment. A heme b-binding site is contributed by H278. The Cytoplasmic portion of the chain corresponds to 293–309 (MHLSFRAKRREKYSNQS).

Belongs to the COX15/CtaA family. Type 1 subfamily. As to quaternary structure, interacts with CtaB. It depends on heme b as a cofactor.

The protein resides in the cell membrane. The enzyme catalyses Fe(II)-heme o + 2 A + H2O = Fe(II)-heme a + 2 AH2. Its pathway is porphyrin-containing compound metabolism; heme A biosynthesis; heme A from heme O: step 1/1. Functionally, catalyzes the conversion of heme O to heme A by two successive hydroxylations of the methyl group at C8. The first hydroxylation forms heme I, the second hydroxylation results in an unstable dihydroxymethyl group, which spontaneously dehydrates, resulting in the formyl group of heme A. The chain is Heme A synthase from Oceanobacillus iheyensis (strain DSM 14371 / CIP 107618 / JCM 11309 / KCTC 3954 / HTE831).